The chain runs to 156 residues: MHCPYCRHPDSRVVDSREAEEGAAIRRRRSCPNCGRRFTTVETAILSVVKRSGVTEPFSREKVIRGVRRACQGREVDDDALNLLAQQVEDAVRAKGSPEVPSHEVGLAILGPLRDLDEVAYLRFASVYRSFTSAEDFEREISEMRAARARAGATAD.

A zinc finger spans residues 3–34; sequence CPYCRHPDSRVVDSREAEEGAAIRRRRSCPNC. One can recognise an ATP-cone domain in the interval 46 to 136; it reads LSVVKRSGVT…VYRSFTSAED (91 aa).

This sequence belongs to the NrdR family. It depends on Zn(2+) as a cofactor.

Negatively regulates transcription of bacterial ribonucleotide reductase nrd genes and operons by binding to NrdR-boxes. This Nocardia farcinica (strain IFM 10152) protein is Transcriptional repressor NrdR.